Here is a 455-residue protein sequence, read N- to C-terminus: Protein FAM124B (455 aa).

Position 49 is a phosphoserine (S49). The tract at residues T270–Q322 is disordered. A compositionally biased stretch (polar residues) spans S313 to Q322.

Belongs to the FAM124 family. Interacts with CHD7 and CHD8.

It is found in the nucleus. This chain is Protein FAM124B (FAM124B), found in Homo sapiens (Human).